A 502-amino-acid chain; its full sequence is Glutamate--tRNA ligase (502 aa).

Residues 9-19 carry the 'HIGH' region motif; that stretch reads PSPTGFPHVGT. The 'KMSKS' region signature appears at 250 to 254; that stretch reads KLSKR. An ATP-binding site is contributed by K253.

This sequence belongs to the class-I aminoacyl-tRNA synthetase family. Glutamate--tRNA ligase type 1 subfamily. As to quaternary structure, monomer.

The protein localises to the cytoplasm. The catalysed reaction is tRNA(Glu) + L-glutamate + ATP = L-glutamyl-tRNA(Glu) + AMP + diphosphate. Functionally, catalyzes the attachment of glutamate to tRNA(Glu) in a two-step reaction: glutamate is first activated by ATP to form Glu-AMP and then transferred to the acceptor end of tRNA(Glu). This is Glutamate--tRNA ligase from Acinetobacter baumannii (strain SDF).